Consider the following 547-residue polypeptide: Chaperonin GroEL (547 aa).

Residues 30 to 33 (TLGP), Lys-51, 87 to 91 (DGTTT), Gly-415, and Asp-495 contribute to the ATP site. The disordered stretch occupies residues 526-547 (QDATPTASPDMGGMGGMGGGMM). Gly residues predominate over residues 537–547 (GGMGGMGGGMM).

It belongs to the chaperonin (HSP60) family. Forms a cylinder of 14 subunits composed of two heptameric rings stacked back-to-back. Interacts with the co-chaperonin GroES.

The protein localises to the cytoplasm. It carries out the reaction ATP + H2O + a folded polypeptide = ADP + phosphate + an unfolded polypeptide.. Together with its co-chaperonin GroES, plays an essential role in assisting protein folding. The GroEL-GroES system forms a nano-cage that allows encapsulation of the non-native substrate proteins and provides a physical environment optimized to promote and accelerate protein folding. The sequence is that of Chaperonin GroEL from Vesicomyosocius okutanii subsp. Calyptogena okutanii (strain HA).